Here is a 120-residue protein sequence, read N- to C-terminus: UPF0145 protein UNCMA_30400 (120 aa).

This sequence belongs to the UPF0145 family.

The chain is UPF0145 protein UNCMA_30400 from Methanocella arvoryzae (strain DSM 22066 / NBRC 105507 / MRE50).